Reading from the N-terminus, the 391-residue chain is MRGVFLDKDKIPYDLVTKKLNEWYTSIKNDQVEQAEIIKTEVEKELLNMEENQDALLYYQLLEFRHEIMLSYMKSKEIEDLNNAYETIKEIEKQGQLTGMLEYYFYFFKGMYEFRRKELISAISAYRIAESKLSEVEDEIEKAEFFFKVSYVYYYMKQTYFSMNYANRALKIFREYEEYAVQTVRCQFIVAGNLIDSLEYERALEQFLKSLEISKESNIEHLIAMSHMNIGICYDELKEYKKASQHLILALEIFEKSKHSFLTKTLFTLTYVEAKQQNYNVALIYFRKGRFIADKSDDKEYSAKFKILEGLFFSDGETQLIKNAFSYLASRKMFADVENFSIEVADYFHEQGNLMLSNEYYRMSIEARRKIKKGEIIDENQPDSIGSSDFK.

6 TPR repeats span residues 62–95, 150–183, 184–217, 224–257, 275–311, and 338–371; these read LEFR…EKQG, SYVY…AVQT, VRCQ…SKES, AMSH…FEKS, KQQN…LEGL, and ENFS…RRKI.

The protein belongs to the Rap family.

Its subcellular location is the cytoplasm. With respect to regulation, inhibited by PhrI. In terms of biological role, activates ICEBs1 gene expression, excision and transfer by inactivating the ICEBs1 repressor protein ImmR. RapI-mediated induction likely results from an increase in the specific activity of the protease ImmA, which mediates proteolysis of ImmR. In addition, is involved in regulation of sporulation. Acts as a phosphatase that specifically dephosphorylates the sporulation initiation phosphotransferase Spo0F and inhibits its activity. This chain is Response regulator aspartate phosphatase I (rapI), found in Bacillus subtilis (strain 168).